We begin with the raw amino-acid sequence, 88 residues long: MDIKLINIGFGNIVSGNRVISIVSPESAPIKRIISEARDRAQLIDATYGRRTRAVIVTDSGHVVLSAIQPETVAHRFMSNKDTKDSDK.

Belongs to the RemA family.

In Acaryochloris marina (strain MBIC 11017), this protein is Putative regulatory protein AM1_5498.